A 2065-amino-acid chain; its full sequence is MGDDSEWMKLPIDQKCEHKVWKARLNGYEEAVKLFQKIVDEKSPEWSKYLGLIKRFVTESNAVAQLKGLEAALVYVENAHVAGKTTGEVVNGVVNKVFNQPKARAKELGADICLMYVEIEKAEVVQEELLKGLDNKNPKIVVACVETVRKALSEFGSKIMTLKPIIKVLPKLFESREKAIRDEAKLLAVEIYRWIRDALRPPLQNINPVQLKELEEEWVKLPQSAPKQTRFLRSQQDLKAKFEQQQAAGDDGGDDGEEEIVPQVDAYELLEAVEILSKLPKDFYDKIEAKKWQERKEALEAVEALVKNPKIEAGDFADLVKALKTVVGKDTNVMLVALAAKCIAGLAAGLRKKFGSYAGHIVPTILEKFKEKKPQVVQALQEAIDAVFLTTTLQNISEDVLAVMDNKNPAIKQQTSLFLARSFRHCTPSTLPKSLLKPFCVALLKQINDSAPEVRDAAFEALGTAQKVVGEKAVNPFLAEVDKLKLDRIKECADKAELANGKKGGAAAGEKKETKAPAAAPGKPVPNQGAAAEKDAGKAAAAPKKAPAAKPGGPVKKAKAPASSGATAKGKKAVENKEIIEQELSPEACEERAAAVLPASCMQQLDSSNWKERLASMEEFQKTVESMERNDIPCQALVKMLAKKPGFKETNFQVMQMKLHIVALIAQKGNFSKTSACAVLDGLVDKVGDVKCGGNAKEALSGIAEACTLPWTAEQVVSLAFAQKNPKNQSETLNWLSNAIKEFGFTGINVKAFISNVKTALAATNPAIRTSAITLLGVMYLYMGAPLRMFFEEEKPALLSQIDAEFEKMKGQTPPVSIRGSKHGSGRDEGEEGEEQDEDAPADVTDLLPRTDISDKISSDLVSKIEDKNWKIRKEGLDEVTAIINEAKFIQPSIGELPSALKGRLNDSNKILVQQTLTILQQLSTAMGHNIKQHVKNLGMPIITVLGDSKANVRAAALGTLKSWVDQTGMKDWLEGEDLSEELKKENPFLRQELLGWLAEKLPSMRTVPSDLQLCVPYLYNCLEDRNGDVRKKAQEALPIFMMHIGFEKMSKATSKLKPASKDQVVALLEKAKASMPAKPAGPPGKASSKQPPAVAQASASPPPAASSDSGSSTSDYKPDPKKTKPGTQASKAKTQSVSSEGNTSLNPSNTSLTPSKANTSLSKAKPAKQTLPGKKAPSKPNAKDEEDKSGPIYIIVPNGKEQRVKDEKALKVLKWNFTTPRDEYIEQLKTQMSPCIARWLQDELFHADFQRQIKGLAVMTEHLESEKEGVISCLDLVLKWFTLRFFDTNTSVLMKCLEYLKLLFIMLSQEEYHLTEMEGTSFLPYLMLKVGEPKDIVRKDVRAILTKMCQVYPASKMFNFVMEGTKSKNSKQRAECLEELGCLVESYGMNVCQPTPAKALKEIAIHIGDRDTTVRNAALNTIVTVYNVHGEQVFKLIGNLSEKDMSMLEERIKRAGKKQAAAAPAKQVEEKPQRVQSANASILRKAPPEDMSSKLNQARNMGGHTEPSHSVPREFQLDLDEIENDNGTVRCEMPALVQHKLDEIFEPVLIPEPKIRAVSPHFDDMHSNTASTINFVISQVASVDINASIQALAQIDEVLRQEDKAEAMSGHIDQFLIATFMQLRLAYNTHMADERLDKDDIVRLYSCIIGNMISLFQMESLAREASTGVLKDLMHGLISLMLDARIEDLEEGQQVVRSVNLLVVKVLEKSDQTNIISALLMLLQDSLLATASSPNFSELVMKCLWRMIRLLPEAINNLNLDRILLDIHNFMRVLPKEKLKQHKSEMPMRTLKTLLHTLCKLKGPKIMDHLSMIENKHESELEAHLLRVMKHSIDRTGSKGDKETEKGASCIEDKVGKANVSDFLAEMFKKIGSKENTKEGLAELYEYKKKYSDADIKPFLKNSSQFFQSYVERGLRLIEMEREGKARIAPNTGMSTHVTEMTPLPTVTNTAAPVSNTNGEEVGPSVYLERLKILRQRCGLDNAKQDERPPLTSLLSKSSAPAVVSSTDMLHSKLSQLRESREQFQHVELDSNQTYPSTTTSSSASSTNIDDLKKRLERIKSSRK.

TOG regions lie at residues 1–240 and 264–515; these read MGDD…DLKA and VDAY…KETK. HEAT repeat units lie at residues 120–157, 160–197, 270–311, 314–352, 356–393, 395–432, and 436–477; these read EKAE…EFGS, MTLK…WIRD, LEAV…NPKI, GDFA…GLRK, SYAG…TTTL, NISE…STLP, and LKPF…VNPF. Positions 500–574 are disordered; it reads NGKKGGAAAG…GATAKGKKAV (75 aa). Low complexity predominate over residues 538-568; that stretch reads KAAAAPKKAPAAKPGGPVKKAKAPASSGATA. The segment at 644 to 808 is TOG 3; it reads KPGFKETNFQ…LSQIDAEFEK (165 aa). HEAT repeat units lie at residues 652–689 and 748–785; these read FQVM…KVGD and INVK…YMGA. The interval 809–849 is disordered; sequence MKGQTPPVSIRGSKHGSGRDEGEEGEEQDEDAPADVTDLLP. The span at 829–841 shows a compositional bias: acidic residues; the sequence is EGEEGEEQDEDAP. The segment at 846 to 1090 is TOG 4; that stretch reads DLLPRTDISD…AGPPGKASSK (245 aa). HEAT repeat units lie at residues 852–889, 892–929, 933–970, and 1015–1052; these read DISD…EAKF, PSIG…AMGH, QHVK…QTGM, and CVPY…KMSK. A compositionally biased stretch (low complexity) spans 1074–1115; the sequence is ASMPAKPAGPPGKASSKQPPAVAQASASPPPAASSDSGSSTS. Residues 1074 to 1192 are disordered; that stretch reads ASMPAKPAGP…AKDEEDKSGP (119 aa). Polar residues predominate over residues 1126-1163; it reads PGTQASKAKTQSVSSEGNTSLNPSNTSLTPSKANTSLS. Residues 1150–1235 form an interaction with microtubule lattice region; sequence NTSLTPSKAN…IEQLKTQMSP (86 aa). Positions 1191 to 1460 are TOG 5; it reads GPIYIIVPNG…ERIKRAGKKQ (270 aa). 5 HEAT repeats span residues 1251 to 1288, 1295 to 1318, 1319 to 1355, 1357 to 1390, and 1395 to 1432; these read QRQI…RFFD, MKCL…LTEM, EGTS…VYPA, KMFN…SYGM, and PTPA…VHGE. Disordered stretches follow at residues 1982-2001 and 2028-2065; these read DNAK…KSSA and VELD…SSRK. Positions 2002 to 2065 are interaction with tacc3; that stretch reads PAVVSSTDML…RLERIKSSRK (64 aa). Low complexity predominate over residues 2038-2048; it reads STTTSSSASST. A compositionally biased stretch (basic and acidic residues) spans 2051 to 2065; it reads DDLKKRLERIKSSRK.

It belongs to the TOG/XMAP215 family. Interacts with tacc3; two molecules of ckap5 interact with 1 molecule of tacc3 probably mediated by coiled coil domains forming a four-helix bundle. Interacts with tacc3 and clathrin forming the TACC3/ch-TOG/clathrin complex located at spindle inter-microtubules bridges. Interacts with ndc80; indicative for an association with the NDC80 comnplex.

The protein resides in the cytoplasm. Its subcellular location is the cytoskeleton. It is found in the spindle pole. The protein localises to the spindle. It localises to the microtubule organizing center. The protein resides in the centrosome. Its subcellular location is the chromosome. It is found in the centromere. The protein localises to the kinetochore. In terms of biological role, binds to the plus end of microtubules and regulates microtubule dynamics and microtubule organization. Acts as a processive microtubule polymerase. Promotes cytoplasmic microtubule nucleation and elongation. Plays a major role in organizing spindle poles. In spindle formation protects kinetochore microtubules from depolymerization by kif2c and has an essential role in centrosomal microtubule assembly independently of kif2c activity. Contributes to centrosome integrity. Acts as a component of the TACC3/ch-TOG/clathrin complex proposed to contribute to stabilization of kinetochore fibers of the mitotic spindle by acting as inter-microtubule bridge. Enhances the strength of NDC80 complex-mediated kinetochore-tip microtubule attachments. In Xenopus laevis (African clawed frog), this protein is Cytoskeleton-associated protein 5-A (ckap5-a).